We begin with the raw amino-acid sequence, 400 residues long: CinA-like protein (400 aa).

This sequence belongs to the CinA family.

The protein is CinA-like protein of Shigella flexneri.